The primary structure comprises 137 residues: Hydrogenase-4 component J (137 aa).

This sequence to E.coli HycH.

Functionally, possible component of hydrogenase 4. This Escherichia coli (strain K12) protein is Hydrogenase-4 component J.